Reading from the N-terminus, the 96-residue chain is Co-chaperonin GroES (96 aa).

It belongs to the GroES chaperonin family. In terms of assembly, heptamer of 7 subunits arranged in a ring. Interacts with the chaperonin GroEL.

It is found in the cytoplasm. In terms of biological role, together with the chaperonin GroEL, plays an essential role in assisting protein folding. The GroEL-GroES system forms a nano-cage that allows encapsulation of the non-native substrate proteins and provides a physical environment optimized to promote and accelerate protein folding. GroES binds to the apical surface of the GroEL ring, thereby capping the opening of the GroEL channel. The polypeptide is Co-chaperonin GroES (Colwellia maris).